The chain runs to 481 residues: Alkaline protease secretion protein AprF (481 aa).

The tract at residues 462-481 (PAPLHTLSKTDTEENRSALN) is disordered. Residues 469 to 481 (SKTDTEENRSALN) are compositionally biased toward basic and acidic residues.

The protein belongs to the outer membrane factor (OMF) (TC 1.B.17) family.

The protein resides in the cell outer membrane. Functionally, involved in the secretion of alkaline protease. This chain is Alkaline protease secretion protein AprF (aprF), found in Pseudomonas aeruginosa (strain ATCC 15692 / DSM 22644 / CIP 104116 / JCM 14847 / LMG 12228 / 1C / PRS 101 / PAO1).